The primary structure comprises 582 residues: Probable inorganic phosphate transporter 1-9 (582 aa).

At 1 to 23 (MAPRIRVLAALDQARTQYYHFKA) the chain is on the cytoplasmic side. A helical membrane pass occupies residues 24–44 (IVIAGMGLFTDSYDLFCISPV). The Extracellular segment spans residues 45-75 (MKIFGRVYYAPSGSVDGSGSGPGVTPPAVVS). Residues 76 to 96 (ATVGVALLGAVAGNVVFGALG) form a helical membrane-spanning segment. Over 97 to 103 (DRVGRRR) the chain is Cytoplasmic. A helical transmembrane segment spans residues 104–124 (VYGACLLLMVCSSVGSGLSVC). At 125 to 130 (RTRRCA) the chain is on the extracellular side. A helical transmembrane segment spans residues 131-151 (LASLCFFRFLLGVGVGGDYPL). The Cytoplasmic portion of the chain corresponds to 152–165 (SATIMSEFANRRTR). A helical transmembrane segment spans residues 166 to 186 (GAFIAAVFSMQGFGILVSSAV). At 187–210 (TMAVAAAFDHYTGYPAPLDTPECA) the chain is on the extracellular side. A helical transmembrane segment spans residues 211 to 231 (DLAWRIILMAGAVPAALTYYW). The Cytoplasmic segment spans residues 232–307 (RMSMPETARY…RRFVRQHGRD (76 aa)). The helical transmembrane segment at 308 to 328 (LFACAAAWFLLDIPYYSSTLF) threads the bilayer. Topologically, residues 329–354 (QSQIYRPWFPPAAKVNAFQEAFNVAK) are extracellular. Residues 355 to 375 (FQAVIAVASTIPGYFAAMLLI) form a helical membrane-spanning segment. The Cytoplasmic portion of the chain corresponds to 376–385 (ERAGRRRLQM). Residues 386-406 (AGFLLMAVFLFALAGPYDGYW) traverse the membrane as a helical segment. The Extracellular segment spans residues 407–415 (RDHAKTAGY). The chain crosses the membrane as a helical span at residues 416–436 (IVLYSLTFFSANLGPNTTTFI). The Cytoplasmic segment spans residues 437-451 (LPAELFPARFRSTCH). The helical transmembrane segment at 452 to 472 (GLSGAAGKLGALVGSIGFLWA) threads the bilayer. Topologically, residues 473–485 (SQQKDGAAAGHLP) are extracellular. A helical membrane pass occupies residues 486-506 (GIGMMYALFVLGGICLLGLAL). The Cytoplasmic portion of the chain corresponds to 507-582 (TYAFTPETMT…SPILPHRMSL (76 aa)). The disordered stretch occupies residues 519 to 541 (LEENESSVQAQSQVGDGGSDAGN).

Belongs to the major facilitator superfamily. Phosphate:H(+) symporter (TC 2.A.1.9) family. As to expression, expressed at low levels in roots.

It is found in the membrane. In terms of biological role, high-affinity transporter for external inorganic phosphate. This chain is Probable inorganic phosphate transporter 1-9 (PHT1-9), found in Oryza sativa subsp. japonica (Rice).